We begin with the raw amino-acid sequence, 525 residues long: Peptide chain release factor 3 (525 aa).

The tr-type G domain maps to 9-276; that stretch reads AKRRTFAIIS…GFTRYAPAPQ (268 aa). GTP is bound by residues 18 to 25, 86 to 90, and 140 to 143; these read SHPDAGKT, DTPGH, and NKFD.

The protein belongs to the TRAFAC class translation factor GTPase superfamily. Classic translation factor GTPase family. PrfC subfamily.

Its subcellular location is the cytoplasm. Its function is as follows. Increases the formation of ribosomal termination complexes and stimulates activities of RF-1 and RF-2. It binds guanine nucleotides and has strong preference for UGA stop codons. It may interact directly with the ribosome. The stimulation of RF-1 and RF-2 is significantly reduced by GTP and GDP, but not by GMP. The sequence is that of Peptide chain release factor 3 from Francisella tularensis subsp. tularensis (strain WY96-3418).